Consider the following 342-residue polypeptide: Uroporphyrinogen decarboxylase (342 aa).

Residues 24–28 (RQAGR), Asp-74, Tyr-151, Ser-206, and His-322 contribute to the substrate site.

Belongs to the uroporphyrinogen decarboxylase family. As to quaternary structure, homodimer.

It is found in the cytoplasm. It carries out the reaction uroporphyrinogen III + 4 H(+) = coproporphyrinogen III + 4 CO2. The protein operates within porphyrin-containing compound metabolism; protoporphyrin-IX biosynthesis; coproporphyrinogen-III from 5-aminolevulinate: step 4/4. Functionally, catalyzes the decarboxylation of four acetate groups of uroporphyrinogen-III to yield coproporphyrinogen-III. The polypeptide is Uroporphyrinogen decarboxylase (Paracoccus denitrificans (strain Pd 1222)).